The sequence spans 525 residues: MVFAGGGLQQGSLEENIDVEHIASMSLFSDFFSYVSSTVGSWSVHSIQPLKRLTSKKRVSESAAVQCISAEVQRNSSTQGTAEALAESVVKPTRRRSSQWKKSTHPLSEVAVHNKPSDCWIVVKNKVYDVSNFADEHPGGSVISTYFGRDGTDVFSSFHAASTWKILQDFYIGDVERVEPTPELLKDFREMRALFLREQLFKSSKLYYVMKLLTNVAIFAASIAIICWSKTISAVLASACMMALCFQQCGWLSHDFLHNQVFETRWLNEVVGYVIGNAVLGFSTGWWKEKHNLHHAAPNECDQTYQPIDEDIDTLPLIAWSKDILATVENKTFLRILQYQHLFFMGLLFFARGSWLFWSWRYTSTAVLSPVDRLLEKGTVLFHYFWFVGTACYLLPGWKPLVWMAVTELMSGMLLGFVFVLSHNGMEVYNSSKEFVSAQIVSTRDIKGNIFNDWFTGGLNRQIEHHLFPTMPRHNLNKIAPRVEVFCKKHGLVYEDVSIATGTCKVLKALKEVAEAAAEQHATTS.

The region spanning 102-176 (KSTHPLSEVA…LQDFYIGDVE (75 aa)) is the Cytochrome b5 heme-binding domain. The heme site is built by His-137 and His-159. The chain crosses the membrane as a helical span at residues 216 to 236 (VAIFAASIAIICWSKTISAVL). The short motif at 254 to 258 (HDFLH) is the Histidine box-1 element. Residues 266-286 (WLNEVVGYVIGNAVLGFSTGW) form a helical membrane-spanning segment. Positions 291–295 (HNLHH) match the Histidine box-2 motif. 3 consecutive transmembrane segments (helical) span residues 340–360 (QHLFFMGLLFFARGSWLFWSW), 378–398 (GTVLFHYFWFVGTACYLLPGW), and 401–421 (LVWMAVTELMSGMLLGFVFVL). A Histidine box-3 motif is present at residues 462-466 (QIEHH).

It belongs to the fatty acid desaturase type 1 family.

The protein resides in the membrane. The enzyme catalyses (9Z,12Z,15Z)-octadecatrienoyl-containing glycerolipid + 2 Fe(II)-[cytochrome b5] + O2 + 2 H(+) = (6Z,9Z,12Z,15Z)-octadecatetraenoyl-containing glycerolipid + 2 Fe(III)-[cytochrome b5] + 2 H2O. It catalyses the reaction a (9Z,12Z)-octadecadienoyl-containing glycerolipid + 2 Fe(II)-[cytochrome b5] + O2 + 2 H(+) = (6Z,9Z,12Z)-octadecatrienoyl-containing glycerolipid + 2 Fe(III)-[cytochrome b5] + 2 H2O. The protein operates within lipid metabolism; polyunsaturated fatty acid biosynthesis. Fatty acid desaturase able to introduce a delta(6)-double bond into delta(9)-unsaturated fatty-acid substrates. Can use both linoleic acid (18:2(9Z,12Z)) and alpha-linolenic acid (18:3(9Z,12Z,15Z)) as substrates. Required for the biosynthesis of arachidonic acid (20:4(5z,8Z,11Z,14Z)). The chain is Acyl-lipid (9-3)-desaturase from Physcomitrium patens (Spreading-leaved earth moss).